We begin with the raw amino-acid sequence, 103 residues long: Protamine-2 (103 aa).

Positions 1–103 (MVRYRMRSLS…RTRRRRCRRH (103 aa)) are disordered. Residues serine 8 and serine 10 each carry the phosphoserine modification. Residues 8-17 (SLSERPHEVH) show a composition bias toward basic and acidic residues. A compositionally biased stretch (low complexity) spans 18 to 29 (GQQVHGQDQGHN). The segment covering 48 to 103 (HRGHSHHRRRRCSRRRLHRIHRRRHRSCRRRRRRSCRHRRRHRRGCRTRRRRCRRH) has biased composition (basic residues).

This sequence belongs to the protamine P2 family. In terms of assembly, interacts with TDRP. Proteolytic processing into mature chains is required for histone eviction during spermatogenesis. Transition proteins (TNP1 and TNP2) are required for processing. Testis.

It is found in the nucleus. The protein resides in the chromosome. Its function is as follows. Protamines substitute for histones in the chromatin of sperm during the haploid phase of spermatogenesis. They compact sperm DNA into a highly condensed, stable and inactive complex. In Macaca nemestrina (Pig-tailed macaque), this protein is Protamine-2 (PRM2).